We begin with the raw amino-acid sequence, 152 residues long: Ribonuclease H (152 aa).

Residues 1 to 142 (MDSKVVIYTD…ADKLAVQGRE (142 aa)) enclose the RNase H type-1 domain. Mg(2+) contacts are provided by aspartate 10, glutamate 48, aspartate 70, and aspartate 134.

This sequence belongs to the RNase H family. Monomer. Requires Mg(2+) as cofactor.

It localises to the cytoplasm. The enzyme catalyses Endonucleolytic cleavage to 5'-phosphomonoester.. In terms of biological role, endonuclease that specifically degrades the RNA of RNA-DNA hybrids. The sequence is that of Ribonuclease H from Rickettsia typhi (strain ATCC VR-144 / Wilmington).